Reading from the N-terminus, the 152-residue chain is Peptide deformylase (152 aa).

Fe cation contacts are provided by cysteine 88 and histidine 130. Glutamate 131 is an active-site residue. Residue histidine 134 participates in Fe cation binding.

Belongs to the polypeptide deformylase family. Fe(2+) serves as cofactor.

It catalyses the reaction N-terminal N-formyl-L-methionyl-[peptide] + H2O = N-terminal L-methionyl-[peptide] + formate. Functionally, removes the formyl group from the N-terminal Met of newly synthesized proteins. Requires at least a dipeptide for an efficient rate of reaction. N-terminal L-methionine is a prerequisite for activity but the enzyme has broad specificity at other positions. The sequence is that of Peptide deformylase from Syntrophomonas wolfei subsp. wolfei (strain DSM 2245B / Goettingen).